Consider the following 343-residue polypeptide: Ribosomal RNA small subunit methyltransferase, chloroplastic (343 aa).

Residues 1-48 (MMNAVITSATINCNSLSPSWTCGDNSPSKLLLGEISAALSRRRTVKVS) constitute a chloroplast transit peptide. The S-adenosyl-L-methionine site is built by His78, Met80, Gly105, Glu126, Asp151, and Asn183.

It belongs to the class I-like SAM-binding methyltransferase superfamily. rRNA adenine N(6)-methyltransferase family.

It is found in the plastid. The protein localises to the chloroplast. Functionally, required for methylation of the 3' adenosines in the small subunit of plastid rRNA. Essential for chloroplast biogenesis at low temperatures. The sequence is that of Ribosomal RNA small subunit methyltransferase, chloroplastic from Arabidopsis thaliana (Mouse-ear cress).